Reading from the N-terminus, the 34-residue chain is MWVVLSKEKILLKKAYYAKTILFSALVLRGVRGE.

This is an uncharacterized protein from Saccharomyces cerevisiae (strain ATCC 204508 / S288c) (Baker's yeast).